The sequence spans 434 residues: Citrate-proton symporter (434 aa).

Over 1–21 the chain is Cytoplasmic; sequence MAQHTPATSRAGTFGAILRVT. The helical transmembrane segment at 22-42 threads the bilayer; that stretch reads SGNFLEQFDFFLFGFYATYIA. Residues 43 to 54 are Periplasmic-facing; that stretch reads RTFFPAESEFAS. A helical transmembrane segment spans residues 55 to 75; it reads LMLTFAVFGSGFLMRPVGAIV. The Cytoplasmic portion of the chain corresponds to 76–87; the sequence is LGAYIDRIGRRK. A helical membrane pass occupies residues 88 to 108; the sequence is GLMVTLAIMGCGTLLIALVPG. The Periplasmic segment spans residues 109–111; it reads YQT. A helical membrane pass occupies residues 112-132; that stretch reads IGLAAPALVLLGRLLQGFSAG. Topologically, residues 133–164 are cytoplasmic; it reads VELGGVSVYLSEIATPGNKGFYTSWQSASQQV. Residues 165–185 form a helical membrane-spanning segment; that stretch reads AIVVAALIGYSLNITLGHDAI. Ser186 is a topological domain (periplasmic). The helical transmembrane segment at 187–207 threads the bilayer; that stretch reads EWGWRIPFFIGCMIIPLIFVL. Topologically, residues 208 to 238 are cytoplasmic; the sequence is RRSLQETEAFLQRKHRPDTREIFATIAKNWR. The helical transmembrane segment at 239–259 threads the bilayer; it reads IITAGTLLVAMTTTTFYFITV. Over 260-276 the chain is Periplasmic; that stretch reads YTPTYGRTVLNLSARDS. A helical transmembrane segment spans residues 277 to 297; the sequence is LIVTMLVGVSNFIWLPIGGAI. The Cytoplasmic portion of the chain corresponds to 298–304; it reads SDRIGRR. Residues 305–325 traverse the membrane as a helical segment; it reads AVLMGITLLALITTWPVMQWL. Residues 326 to 335 are Periplasmic-facing; sequence TAAPDFTRMT. Residues 336–356 traverse the membrane as a helical segment; sequence LVLLWFSFFFGMYNGAMVAAL. At 357–366 the chain is on the cytoplasmic side; it reads TEVMPVYVRT. The chain crosses the membrane as a helical span at residues 367 to 387; sequence VGFSLAFSLATAIFGGLTPAI. Topologically, residues 388 to 400 are periplasmic; that stretch reads STALVKLTGDKSS. A helical membrane pass occupies residues 401-421; that stretch reads PGWWLMCAALCGLAATAMLFV. Residues 422-434 are Cytoplasmic-facing; sequence RLSRGYIAAENKA.

This sequence belongs to the major facilitator superfamily. Metabolite:H+ Symporter (MHS) family (TC 2.A.1.6) family.

It localises to the cell inner membrane. Functionally, uptake of citrate across the boundary membrane with the concomitant transport of protons into the cell (symport system). The polypeptide is Citrate-proton symporter (citA) (Salmonella typhi).